The sequence spans 1003 residues: UPF0182 protein Mkms_1433 (1003 aa).

A run of 7 helical transmembrane segments spans residues 18–38, 63–83, 114–134, 176–196, 211–231, 260–280, and 288–308; these read VLIG…RFID, VVVF…GLAL, LFGF…AQSY, FVAT…FGGI, IQLV…YWLD, KLIL…AIVL, and IGVV…PLVV. Low complexity predominate over residues 902–937; it reads ATGPAPANLPDGQPAAQPPNGQQPAAQTPGNQAGRA. The interval 902–979 is disordered; that stretch reads ATGPAPANLP…MSGLQDAQRS (78 aa).

Belongs to the UPF0182 family.

Its subcellular location is the cell membrane. This chain is UPF0182 protein Mkms_1433, found in Mycobacterium sp. (strain KMS).